A 256-amino-acid chain; its full sequence is Flap endonuclease Xni (256 aa).

Position 105 (D105) interacts with Mg(2+). The 94-residue stretch at 163–256 folds into the 5'-3' exonuclease domain; the sequence is RSQLIDYLAL…QFRIKKPDSE (94 aa). L172, A173, P181, V183, and I186 together coordinate K(+). The segment at 185–190 is interaction with DNA; sequence GIGPKS.

The protein belongs to the Xni family. Requires Mg(2+) as cofactor. K(+) serves as cofactor.

In terms of biological role, has flap endonuclease activity. During DNA replication, flap endonucleases cleave the 5'-overhanging flap structure that is generated by displacement synthesis when DNA polymerase encounters the 5'-end of a downstream Okazaki fragment. In Shewanella pealeana (strain ATCC 700345 / ANG-SQ1), this protein is Flap endonuclease Xni.